A 130-amino-acid polypeptide reads, in one-letter code: Small ribosomal subunit protein uS9 (130 aa).

The protein belongs to the universal ribosomal protein uS9 family.

In Buchnera aphidicola subsp. Acyrthosiphon pisum (strain 5A), this protein is Small ribosomal subunit protein uS9.